The primary structure comprises 818 residues: LisH domain-containing protein ARMC9 (818 aa).

One can recognise a LisH domain in the interval 7-39 (HESELLGLVKEYLDFAEFEDTLKTFSKECKIKG). Residues 204–230 (QSNKEILQQLHQQLVEAERRSVTYLKR) are a coiled coil. Ser582 bears the Phosphoserine mark. 2 disordered regions span residues 642-755 (VQWS…TTRE) and 790-818 (SSCGPQQASRPGSTASSTRGLPSSQSHRK). Residues 701 to 711 (STPESCVSSSS) are compositionally biased toward low complexity. The span at 792–818 (CGPQQASRPGSTASSTRGLPSSQSHRK) shows a compositional bias: polar residues.

As to quaternary structure, interacts with TOGARAM1, CCDC66, CEP104, CSPP1 and CEP290. Interacts with NDUFAF2. Strongly expressed in most melanomas and melanocytes. Weakly expressed in the testis.

Its subcellular location is the cytoplasm. It localises to the cytoskeleton. The protein resides in the cilium basal body. The protein localises to the cell projection. It is found in the cilium. Its subcellular location is the microtubule organizing center. It localises to the centrosome. The protein resides in the centriole. Its function is as follows. Involved in ciliogenesis. It is required for appropriate acetylation and polyglutamylation of ciliary microtubules, and regulation of cilium length. Acts as a positive regulator of hedgehog (Hh)signaling. May participate in the trafficking and/or retention of GLI2 and GLI3 proteins at the ciliary tip. This chain is LisH domain-containing protein ARMC9, found in Homo sapiens (Human).